A 219-amino-acid polypeptide reads, in one-letter code: Uracil-DNA glycosylase (219 aa).

The active-site Proton acceptor is aspartate 61.

Belongs to the uracil-DNA glycosylase (UDG) superfamily. UNG family.

It localises to the cytoplasm. It catalyses the reaction Hydrolyzes single-stranded DNA or mismatched double-stranded DNA and polynucleotides, releasing free uracil.. Functionally, excises uracil residues from the DNA which can arise as a result of misincorporation of dUMP residues by DNA polymerase or due to deamination of cytosine. In Haemophilus influenzae (strain PittEE), this protein is Uracil-DNA glycosylase.